The primary structure comprises 199 residues: uncharacterized protein (199 aa).

The interval 1–30 (MEDAAAPGRTEGVLERQGAPPAAGQGGALV) is disordered. Positions 71–101 (RANATNKLTVIAEQIQHLQEQARKVLEDAHR) form a coiled coil.

This is an uncharacterized protein from Homo sapiens (Human).